The sequence spans 249 residues: 5'-nucleotidase SurE (249 aa).

Residues Asp8, Asp9, Ser39, and Asn91 each coordinate a divalent metal cation.

The protein belongs to the SurE nucleotidase family. Requires a divalent metal cation as cofactor.

The protein resides in the cytoplasm. It carries out the reaction a ribonucleoside 5'-phosphate + H2O = a ribonucleoside + phosphate. Functionally, nucleotidase that shows phosphatase activity on nucleoside 5'-monophosphates. The polypeptide is 5'-nucleotidase SurE (Pseudomonas syringae pv. tomato (strain ATCC BAA-871 / DC3000)).